The sequence spans 333 residues: Holliday junction branch migration complex subunit RuvB (333 aa).

The segment at 1–182 (MDERLLSGES…FGVLSRLEYY (182 aa)) is large ATPase domain (RuvB-L). ATP contacts are provided by residues L21, R22, G63, K66, T67, T68, 129–131 (EDF), R172, Y182, and R219. T67 provides a ligand contact to Mg(2+). A small ATPAse domain (RuvB-S) region spans residues 183–253 (TVDQLSAIVE…ITQMALELLQ (71 aa)). The tract at residues 256 to 333 (KLGLDHIDHK…EHFGMEMPKV (78 aa)) is head domain (RuvB-H). 2 residues coordinate DNA: R311 and R316.

It belongs to the RuvB family. In terms of assembly, homohexamer. Forms an RuvA(8)-RuvB(12)-Holliday junction (HJ) complex. HJ DNA is sandwiched between 2 RuvA tetramers; dsDNA enters through RuvA and exits via RuvB. An RuvB hexamer assembles on each DNA strand where it exits the tetramer. Each RuvB hexamer is contacted by two RuvA subunits (via domain III) on 2 adjacent RuvB subunits; this complex drives branch migration. In the full resolvosome a probable DNA-RuvA(4)-RuvB(12)-RuvC(2) complex forms which resolves the HJ.

The protein localises to the cytoplasm. The enzyme catalyses ATP + H2O = ADP + phosphate + H(+). The RuvA-RuvB-RuvC complex processes Holliday junction (HJ) DNA during genetic recombination and DNA repair, while the RuvA-RuvB complex plays an important role in the rescue of blocked DNA replication forks via replication fork reversal (RFR). RuvA specifically binds to HJ cruciform DNA, conferring on it an open structure. The RuvB hexamer acts as an ATP-dependent pump, pulling dsDNA into and through the RuvAB complex. RuvB forms 2 homohexamers on either side of HJ DNA bound by 1 or 2 RuvA tetramers; 4 subunits per hexamer contact DNA at a time. Coordinated motions by a converter formed by DNA-disengaged RuvB subunits stimulates ATP hydrolysis and nucleotide exchange. Immobilization of the converter enables RuvB to convert the ATP-contained energy into a lever motion, pulling 2 nucleotides of DNA out of the RuvA tetramer per ATP hydrolyzed, thus driving DNA branch migration. The RuvB motors rotate together with the DNA substrate, which together with the progressing nucleotide cycle form the mechanistic basis for DNA recombination by continuous HJ branch migration. Branch migration allows RuvC to scan DNA until it finds its consensus sequence, where it cleaves and resolves cruciform DNA. This is Holliday junction branch migration complex subunit RuvB from Bacillus cereus (strain Q1).